The primary structure comprises 514 residues: Peptide chain release factor 3 (514 aa).

In terms of domain architecture, tr-type G spans 8–268 (KKRRTFAIIS…TFLEFAPEPH (261 aa)). Residues 17-24 (SHPDAGKT), 85-89 (DTPGH), and 139-142 (NKLD) contribute to the GTP site.

The protein belongs to the TRAFAC class translation factor GTPase superfamily. Classic translation factor GTPase family. PrfC subfamily.

The protein localises to the cytoplasm. In terms of biological role, increases the formation of ribosomal termination complexes and stimulates activities of RF-1 and RF-2. It binds guanine nucleotides and has strong preference for UGA stop codons. It may interact directly with the ribosome. The stimulation of RF-1 and RF-2 is significantly reduced by GTP and GDP, but not by GMP. The chain is Peptide chain release factor 3 from Streptococcus pyogenes serotype M1.